An 83-amino-acid chain; its full sequence is MNYLVMISLALLLMIGVESVRDGYIVYPHNCVYHCIPSCDGLCKENGATSGSCGYIIKVGIACWCKDLPENVPIYDRSYKCYR.

The N-terminal stretch at 1-19 (MNYLVMISLALLLMIGVES) is a signal peptide. The region spanning 21–82 (RDGYIVYPHN…PIYDRSYKCY (62 aa)) is the LCN-type CS-alpha/beta domain. 4 disulfide bridges follow: cysteine 31-cysteine 81, cysteine 35-cysteine 53, cysteine 39-cysteine 63, and cysteine 43-cysteine 65.

It belongs to the long (4 C-C) scorpion toxin superfamily. Sodium channel inhibitor family. Alpha subfamily. In terms of processing, the C-terminal basic residue is removed by a carboxypeptidase. In terms of tissue distribution, expressed by the venom gland.

Its subcellular location is the secreted. Its function is as follows. Alpha toxins bind voltage-independently at site-3 of sodium channels (Nav) and inhibit the inactivation of the activated channels, thereby blocking neuronal transmission. In Androctonus amoreuxi (African fattail scorpion), this protein is Toxin Aam1 (H1).